The chain runs to 143 residues: Histone H2AX (143 aa).

The interval 1-22 (MSGRGKTGGKARAKAKSRSSRA) is disordered. At serine 2 the chain carries N-acetylserine. Serine 2 carries the post-translational modification Phosphoserine. Lysine 6 and lysine 10 each carry N6-acetyllysine. Residues 7 to 19 (TGGKARAKAKSRS) are compositionally biased toward basic residues. The residue at position 10 (lysine 10) is an N6-lactoyllysine; alternate. Residues lysine 14 and lysine 16 each participate in a glycyl lysine isopeptide (Lys-Gly) (interchain with G-Cter in ubiquitin) cross-link. Residue lysine 37 is modified to N6-acetyllysine. Lysine 120 is covalently cross-linked (Glycyl lysine isopeptide (Lys-Gly) (interchain with G-Cter in ubiquitin)). Residues 121–143 (TSATVGPKAPSGGKKATQASQEY) are disordered. Serine 122 bears the Phosphoserine mark. Glycyl lysine isopeptide (Lys-Gly) (interchain with G-Cter in SUMO2) cross-links involve residues lysine 128 and lysine 135. Serine 140 bears the Phosphoserine; by ATM, ATR and PRKDC mark. Residues 140–141 (SQ) carry the [ST]-Q motif motif. The residue at position 143 (tyrosine 143) is a Phosphotyrosine; by WSTF.

This sequence belongs to the histone H2A family. As to quaternary structure, the nucleosome is a histone octamer containing two molecules each of H2A, H2B, H3 and H4 assembled in one H3-H4 heterotetramer and two H2A-H2B heterodimers. The octamer wraps approximately 147 bp of DNA. Interacts with numerous proteins required for DNA damage signaling and repair when phosphorylated on Ser-140. These include MDC1, TP53BP1, BRCA1 and the MRN complex, composed of MRE11, RAD50, and NBN. Interaction with the MRN complex is mediated at least in part by NBN. Also interacts with DHX9/NDHII when phosphorylated on Ser-140 and MCPH1 when phosphorylated at Ser-140 or Tyr-143. Interacts with ARRB2; the interaction is detected in the nucleus upon OR1D2 stimulation. Interacts with WRAP53/TCAB1. Interacts with HDGFL2. Interacts with DNA damage up-regulated protein DDUP. Forms a complex with DDUP and RAD18 following DDUP phosphorylation. In terms of assembly, (Microbial infection) Interacts with Epstein-Barr virus protein EBNA6. In terms of processing, phosphorylated by VRK1. Phosphorylated on Ser-140 (to form gamma-H2AX or H2AX139ph) in response to DNA double strand breaks (DSBs) generated by exogenous genotoxic agents and by stalled replication forks, and may also occur during meiotic recombination events and immunoglobulin class switching in lymphocytes. Phosphorylation can extend up to several thousand nucleosomes from the actual site of the DSB and may mark the surrounding chromatin for recruitment of proteins required for DNA damage signaling and repair. Widespread phosphorylation may also serve to amplify the damage signal or aid repair of persistent lesions. Phosphorylation of Ser-140 (H2AX139ph) in response to ionizing radiation is mediated by both ATM and PRKDC while defects in DNA replication induce Ser-140 phosphorylation (H2AX139ph) subsequent to activation of ATR and PRKDC. Dephosphorylation of Ser-140 by PP2A is required for DNA DSB repair. In meiosis, Ser-140 phosphorylation (H2AX139ph) may occur at synaptonemal complexes during leptotene as an ATM-dependent response to the formation of programmed DSBs by SPO11. Ser-140 phosphorylation (H2AX139ph) may subsequently occurs at unsynapsed regions of both autosomes and the XY bivalent during zygotene, downstream of ATR and BRCA1 activation. Ser-140 phosphorylation (H2AX139ph) may also be required for transcriptional repression of unsynapsed chromatin and meiotic sex chromosome inactivation (MSCI), whereby the X and Y chromosomes condense in pachytene to form the heterochromatic XY-body. During immunoglobulin class switch recombination in lymphocytes, Ser-140 phosphorylation (H2AX139ph) may occur at sites of DNA-recombination subsequent to activation of the activation-induced cytidine deaminase AICDA. Phosphorylation at Tyr-143 (H2AXY142ph) by BAZ1B/WSTF determines the relative recruitment of either DNA repair or pro-apoptotic factors. Phosphorylation at Tyr-143 (H2AXY142ph) favors the recruitment of APBB1/FE65 and pro-apoptosis factors such as MAPK8/JNK1, triggering apoptosis. In contrast, dephosphorylation of Tyr-143 by EYA proteins (EYA1, EYA2, EYA3 or EYA4) favors the recruitment of MDC1-containing DNA repair complexes to the tail of phosphorylated Ser-140 (H2AX139ph). Post-translationally, monoubiquitination of Lys-120 (H2AXK119ub) by RING1 and RNF2/RING2 complex gives a specific tag for epigenetic transcriptional repression. Following DNA double-strand breaks (DSBs), it is ubiquitinated through 'Lys-63' linkage of ubiquitin moieties by the E2 ligase UBE2N and the E3 ligases RNF8 and RNF168, leading to the recruitment of repair proteins to sites of DNA damage. Ubiquitination at Lys-14 and Lys-16 (H2AK13Ub and H2AK15Ub, respectively) in response to DNA damage is initiated by RNF168 that mediates monoubiquitination at these 2 sites, and 'Lys-63'-linked ubiquitin are then conjugated to monoubiquitin; RNF8 is able to extend 'Lys-63'-linked ubiquitin chains in vitro. H2AK119Ub and ionizing radiation-induced 'Lys-63'-linked ubiquitination (H2AK13Ub and H2AK15Ub) are distinct events. Acetylation at Lys-6 (H2AXK5ac) by KAT5 component of the NuA4 histone acetyltransferase complex promotes NBN/NBS1 assembly at the sites of DNA damage. Acetylation at Lys-37 increases in S and G2 phases. This modification has been proposed to play a role in DNA double-strand break repair.

It is found in the nucleus. The protein resides in the chromosome. In terms of biological role, variant histone H2A which replaces conventional H2A in a subset of nucleosomes. Nucleosomes wrap and compact DNA into chromatin, limiting DNA accessibility to the cellular machineries which require DNA as a template. Histones thereby play a central role in transcription regulation, DNA repair, DNA replication and chromosomal stability. DNA accessibility is regulated via a complex set of post-translational modifications of histones, also called histone code, and nucleosome remodeling. Required for checkpoint-mediated arrest of cell cycle progression in response to low doses of ionizing radiation and for efficient repair of DNA double strand breaks (DSBs) specifically when modified by C-terminal phosphorylation. The polypeptide is Histone H2AX (Homo sapiens (Human)).